A 208-amino-acid polypeptide reads, in one-letter code: CASP-like protein 2A1 (208 aa).

At 1–36 (MSKMAEQKAAAVDGLGGAGAADAAPAGEAAAARVRP) the chain is on the cytoplasmic side. The helical transmembrane segment at 37-57 (VETLLRAAPLGLCVAAMTVML) threads the bilayer. The Extracellular portion of the chain corresponds to 58-78 (RDQQSNEYGTVAYSDLGGFKY). The chain crosses the membrane as a helical span at residues 79-99 (LVYANGLCAAYSLVSAFYTAV). Over 100–108 (PRPATVSRS) the chain is Cytoplasmic. A helical transmembrane segment spans residues 109–129 (WVVFLLDQVFTYLILAAGAAA). The Extracellular segment spans residues 130 to 161 (AELLYLAYNGDKEVTWSEACGVFGSFCRQART). The helical transmembrane segment at 162–182 (SVAITFGTVLCFILLSLISSY) threads the bilayer. The Cytoplasmic portion of the chain corresponds to 183 to 208 (RLFSAYEAPPSSALGSKGVEIAAYPR).

This sequence belongs to the Casparian strip membrane proteins (CASP) family. As to quaternary structure, homodimer and heterodimers.

Its subcellular location is the cell membrane. This is CASP-like protein 2A1 from Sorghum bicolor (Sorghum).